Here is a 227-residue protein sequence, read N- to C-terminus: MMLQIPDVLSKAQVAQCRQMMDVADWTDGNATSGHQSALAKRNMQLPEGSPVARQIGDLIQDALGANATFFSAALPLKVFPPLFNRYEGGQAFDNHVDNAIRYLRGTGFRVRSDLSATLFLTEPQDYDGGELVIEDTYGQHRVKLPAGYMVLYPATSLHHVTPVTRGARVSSFFWIQSMVRDEGQRALLFELDTRIQQVAEEMGQKDSGVVGLTGVYHNLLRRWADA.

The region spanning 78–178 (KVFPPLFNRY…RVSSFFWIQS (101 aa)) is the Fe2OG dioxygenase domain. Fe cation contacts are provided by histidine 96, aspartate 98, and histidine 159. A 2-oxoglutarate-binding site is contributed by arginine 169.

Fe(2+) serves as cofactor. Requires L-ascorbate as cofactor.

The polypeptide is PKHD-type hydroxylase Reut_B4660 (Cupriavidus pinatubonensis (strain JMP 134 / LMG 1197) (Cupriavidus necator (strain JMP 134))).